Reading from the N-terminus, the 306-residue chain is Protein-L-isoaspartate O-methyltransferase 2 (306 aa).

The interval 1–82 (MSTTPPRNKF…ASAATAGGGG (82 aa)) is disordered. Residues 38–48 (PAAPTPAPAKP) are compositionally biased toward pro residues. Residues 54 to 77 (PRTAAPAPAPVPASAVEQRASAAT) are compositionally biased toward low complexity. Residue S142 is part of the active site.

It belongs to the methyltransferase superfamily. L-isoaspartyl/D-aspartyl protein methyltransferase family.

The protein resides in the cytoplasm. It catalyses the reaction [protein]-L-isoaspartate + S-adenosyl-L-methionine = [protein]-L-isoaspartate alpha-methyl ester + S-adenosyl-L-homocysteine. Catalyzes the methyl esterification of L-isoaspartyl residues in peptides and proteins that result from spontaneous decomposition of normal L-aspartyl and L-asparaginyl residues. It plays a role in the repair and/or degradation of damaged proteins. This is Protein-L-isoaspartate O-methyltransferase 2 from Cupriavidus necator (strain ATCC 17699 / DSM 428 / KCTC 22496 / NCIMB 10442 / H16 / Stanier 337) (Ralstonia eutropha).